The primary structure comprises 127 residues: Large ribosomal subunit protein bL12 (127 aa).

Residues 94–114 (VDGAPSTLKEAASKEEAEEAK) form a disordered region. Residues 104-114 (AASKEEAEEAK) show a composition bias toward basic and acidic residues.

This sequence belongs to the bacterial ribosomal protein bL12 family. Homodimer. Part of the ribosomal stalk of the 50S ribosomal subunit. Forms a multimeric L10(L12)X complex, where L10 forms an elongated spine to which 2 to 4 L12 dimers bind in a sequential fashion. Binds GTP-bound translation factors.

Functionally, forms part of the ribosomal stalk which helps the ribosome interact with GTP-bound translation factors. Is thus essential for accurate translation. In Nitratidesulfovibrio vulgaris (strain ATCC 29579 / DSM 644 / CCUG 34227 / NCIMB 8303 / VKM B-1760 / Hildenborough) (Desulfovibrio vulgaris), this protein is Large ribosomal subunit protein bL12.